Consider the following 156-residue polypeptide: MAENPIYGPFFGVMGAASAIIFSALGAAYGTAKSGTGIAAMSVMRPELIMKSIIPVVMAGIIAIYGLVVAVLIAGSLDSPSNNYTLYRGFIHLGAGLAVGFSGLAAGFAIGIVGDAGVRGTAQQPRLFVGMILILIFAEVLGLYGLIVAIYLYTKQ.

The Lumenal portion of the chain corresponds to 1–7 (MAENPIY). Residues 8 to 30 (GPFFGVMGAASAIIFSALGAAYG) traverse the membrane as a helical segment. The Cytoplasmic portion of the chain corresponds to 31–52 (TAKSGTGIAAMSVMRPELIMKS). A helical membrane pass occupies residues 53-73 (IIPVVMAGIIAIYGLVVAVLI). The Lumenal segment spans residues 74-92 (AGSLDSPSNNYTLYRGFIH). The chain crosses the membrane as a helical span at residues 93–114 (LGAGLAVGFSGLAAGFAIGIVG). Residues 115–126 (DAGVRGTAQQPR) lie on the Cytoplasmic side of the membrane. The chain crosses the membrane as a helical span at residues 127-152 (LFVGMILILIFAEVLGLYGLIVAIYL). Residues 153–156 (YTKQ) are Lumenal-facing.

The protein belongs to the V-ATPase proteolipid subunit family. In terms of assembly, V-ATPase is a heteromultimeric enzyme made up of two complexes: the ATP-hydrolytic V1 complex and the proton translocation V0 complex. The V1 complex consists of three catalytic AB heterodimers that form a heterohexamer, three peripheral stalks each consisting of EG heterodimers, one central rotor including subunits D and F, and the regulatory subunits C and H. The proton translocation complex V0 consists of the proton transport subunit a, a ring of proteolipid subunits c9c'', rotary subunit d, subunits e and f, and the accessory subunits VhaAC45 and ATP6AP2.

It is found in the membrane. Its function is as follows. Proton-conducting pore forming subunit of the V0 complex of vacuolar(H+)-ATPase (V-ATPase), a multisubunit enzyme composed of a peripheral complex (V1) that hydrolyzes ATP and a membrane integral complex (V0) that translocates protons. V-ATPase is responsible for acidifying and maintaining the pH of intracellular compartments and in some cell types, is targeted to the plasma membrane, where it is responsible for acidifying the extracellular environment. The chain is V-type proton ATPase 16 kDa proteolipid subunit c (VHA16) from Manduca sexta (Tobacco hawkmoth).